The primary structure comprises 320 residues: Ferrochelatase (320 aa).

Residues histidine 194 and glutamate 275 each coordinate Fe cation.

Belongs to the ferrochelatase family. In terms of assembly, monomer.

It is found in the cytoplasm. The catalysed reaction is heme b + 2 H(+) = protoporphyrin IX + Fe(2+). It functions in the pathway porphyrin-containing compound metabolism; protoheme biosynthesis; protoheme from protoporphyrin-IX: step 1/1. In terms of biological role, catalyzes the ferrous insertion into protoporphyrin IX. In Escherichia coli (strain SMS-3-5 / SECEC), this protein is Ferrochelatase.